The following is a 930-amino-acid chain: Translation initiation factor IF-2 (930 aa).

Residues 50 to 67 show a composition bias toward low complexity; it reads FKPAAAPKVEAKPAAPKV. 2 disordered regions span residues 50–217 and 260–346; these read FKPA…SSEE and EVVP…HELP. Basic and acidic residues-rich tracts occupy residues 68-90 and 110-125; these read SAEKKAEKSEPAKPAVAKEEAKP and FKAEREARAKEQAERR. The segment covering 129–141 has biased composition (low complexity); the sequence is KGNNRDQQQNGNR. 2 stretches are compositionally biased toward basic and acidic residues: residues 157-167 and 262-295; these read RDNRRFNDQAK and VPEKKEPAVDTRRKKQARPDKNRDDYDHEEDGPR. Over residues 309–318 the composition is skewed to low complexity; that stretch reads NQKNSNWNNN. Basic and acidic residues predominate over residues 337–346; the sequence is VTERKFHELP. The tr-type G domain maps to 432–599; sequence ERPPVVTIMG…TVLLVAEIQE (168 aa). The tract at residues 441–448 is G1; it reads GHVDHGKT. 441 to 448 is a binding site for GTP; that stretch reads GHVDHGKT. A G2 region spans residues 466-470; it reads GITQH. The segment at 487–490 is G3; sequence DTPG. GTP contacts are provided by residues 487–491 and 541–544; these read DTPGH and NKID. The tract at residues 541–544 is G4; sequence NKID. Residues 577–579 form a G5 region; sequence SAK.

Belongs to the TRAFAC class translation factor GTPase superfamily. Classic translation factor GTPase family. IF-2 subfamily.

It localises to the cytoplasm. Its function is as follows. One of the essential components for the initiation of protein synthesis. Protects formylmethionyl-tRNA from spontaneous hydrolysis and promotes its binding to the 30S ribosomal subunits. Also involved in the hydrolysis of GTP during the formation of the 70S ribosomal complex. This Streptococcus pneumoniae (strain ATCC 700669 / Spain 23F-1) protein is Translation initiation factor IF-2.